Reading from the N-terminus, the 239-residue chain is MFPSFEVIPAVDMQDGQVVQLVGGERGTETEYGDPVAAAQRWVDAGAETLHLVDLDGAFEGERANADAVEAVLEATDVSVQLGGGIRTVDDADSLLSMGVDRVILGTAAVENPDIVGEINDRHPGSVVVSLDAKDGEVVVSGWTESTGLDPAEAAARYEAEGAGGVLFTDVDVEGQLSGVRADEIARVVDAVDIPVIASGGVSTLSDIEALKDAGAAATVVGTALYEGEFTLEEAAAVV.

The Proton acceptor role is filled by aspartate 12. Residue aspartate 132 is the Proton donor of the active site.

It belongs to the HisA/HisF family.

The protein resides in the cytoplasm. It catalyses the reaction 1-(5-phospho-beta-D-ribosyl)-5-[(5-phospho-beta-D-ribosylamino)methylideneamino]imidazole-4-carboxamide = 5-[(5-phospho-1-deoxy-D-ribulos-1-ylimino)methylamino]-1-(5-phospho-beta-D-ribosyl)imidazole-4-carboxamide. Its pathway is amino-acid biosynthesis; L-histidine biosynthesis; L-histidine from 5-phospho-alpha-D-ribose 1-diphosphate: step 4/9. This chain is 1-(5-phosphoribosyl)-5-[(5-phosphoribosylamino)methylideneamino] imidazole-4-carboxamide isomerase, found in Natronomonas pharaonis (strain ATCC 35678 / DSM 2160 / CIP 103997 / JCM 8858 / NBRC 14720 / NCIMB 2260 / Gabara) (Halobacterium pharaonis).